The sequence spans 51 residues: Large ribosomal subunit protein eL39 (51 aa).

Belongs to the eukaryotic ribosomal protein eL39 family.

The polypeptide is Large ribosomal subunit protein eL39 (Saccharolobus islandicus (strain L.S.2.15 / Lassen #1) (Sulfolobus islandicus)).